The sequence spans 503 residues: Probable DNA ligase (503 aa).

Residue E210 participates in ATP binding. K212 (N6-AMP-lysine intermediate) is an active-site residue. 6 residues coordinate ATP: R217, R232, E261, F296, R367, and K373.

The protein belongs to the ATP-dependent DNA ligase family. Requires Mg(2+) as cofactor.

The catalysed reaction is ATP + (deoxyribonucleotide)n-3'-hydroxyl + 5'-phospho-(deoxyribonucleotide)m = (deoxyribonucleotide)n+m + AMP + diphosphate.. Functionally, DNA ligase that seals nicks in double-stranded DNA during DNA replication, DNA recombination and DNA repair. The chain is Probable DNA ligase from Rhodococcus opacus (strain B4).